The primary structure comprises 207 residues: 5-nitrosalicylic acid 1,2-dioxygenase (207 aa).

Residues 85–151 enclose the Cupin type-2 domain; it reads QLIHPGEEVT…GDKDTLMYVI (67 aa).

The catalysed reaction is 5-nitrosalicylate + O2 = 2-oxo-3-(5-oxofuran-2-ylidene)propanoate + nitrite + H(+). Dioxygenase that catalyzes the cleavage of the aromatic ring of 5-nitrosalicylate (5NSA) without prior removal of the nitro group in biodegradation of 5-nitroanthranilate. The polypeptide is 5-nitrosalicylic acid 1,2-dioxygenase (naaB) (Bradyrhizobium sp).